We begin with the raw amino-acid sequence, 54 residues long: Large ribosomal subunit protein bL33 (54 aa).

Belongs to the bacterial ribosomal protein bL33 family.

This Elusimicrobium minutum (strain Pei191) protein is Large ribosomal subunit protein bL33.